The sequence spans 596 residues: Elongation factor 4 (596 aa).

In terms of domain architecture, tr-type G spans 2 to 184 (KHIRNFSIIA…VIVAKIPPPE (183 aa)). GTP contacts are provided by residues 14 to 19 (DHGKST) and 131 to 134 (NKID).

Belongs to the TRAFAC class translation factor GTPase superfamily. Classic translation factor GTPase family. LepA subfamily.

It is found in the cell inner membrane. The catalysed reaction is GTP + H2O = GDP + phosphate + H(+). Functionally, required for accurate and efficient protein synthesis under certain stress conditions. May act as a fidelity factor of the translation reaction, by catalyzing a one-codon backward translocation of tRNAs on improperly translocated ribosomes. Back-translocation proceeds from a post-translocation (POST) complex to a pre-translocation (PRE) complex, thus giving elongation factor G a second chance to translocate the tRNAs correctly. Binds to ribosomes in a GTP-dependent manner. In Shewanella putrefaciens (strain CN-32 / ATCC BAA-453), this protein is Elongation factor 4.